The following is a 157-amino-acid chain: Transcription elongation factor GreA (157 aa).

A coiled-coil region spans residues Met-1–Val-75.

This sequence belongs to the GreA/GreB family.

Its function is as follows. Necessary for efficient RNA polymerase transcription elongation past template-encoded arresting sites. The arresting sites in DNA have the property of trapping a certain fraction of elongating RNA polymerases that pass through, resulting in locked ternary complexes. Cleavage of the nascent transcript by cleavage factors such as GreA or GreB allows the resumption of elongation from the new 3'terminus. GreA releases sequences of 2 to 3 nucleotides. In Mycoplasma capricolum subsp. capricolum (strain California kid / ATCC 27343 / NCTC 10154), this protein is Transcription elongation factor GreA.